The chain runs to 110 residues: Large ribosomal subunit protein uL22 (110 aa).

The protein belongs to the universal ribosomal protein uL22 family. Part of the 50S ribosomal subunit.

In terms of biological role, this protein binds specifically to 23S rRNA; its binding is stimulated by other ribosomal proteins, e.g. L4, L17, and L20. It is important during the early stages of 50S assembly. It makes multiple contacts with different domains of the 23S rRNA in the assembled 50S subunit and ribosome. Functionally, the globular domain of the protein is located near the polypeptide exit tunnel on the outside of the subunit, while an extended beta-hairpin is found that lines the wall of the exit tunnel in the center of the 70S ribosome. The chain is Large ribosomal subunit protein uL22 from Geobacter metallireducens (strain ATCC 53774 / DSM 7210 / GS-15).